The following is a 324-amino-acid chain: NAD(P)H-dependent D-xylose reductase XYR1 (324 aa).

The active-site Proton donor is the Tyr50. His112 contacts substrate. NAD(+) is bound by residues 168–169 (SN), 217–226 (SSFGPASFKE), and 273–283 (KSSREKTMKSN).

This sequence belongs to the aldo/keto reductase family.

The enzyme catalyses xylitol + NAD(+) = D-xylose + NADH + H(+). It carries out the reaction xylitol + NADP(+) = D-xylose + NADPH + H(+). Its pathway is carbohydrate metabolism; D-xylose degradation. Its function is as follows. Catalyzes the initial reaction in the xylose utilization pathway by reducing D-xylose into xylitol. Xylose is a major component of hemicelluloses such as xylan. Most fungi utilize D-xylose via three enzymatic reactions, xylose reductase (XR), xylitol dehydrogenase (XDH), and xylulokinase, to form xylulose 5-phosphate, which enters pentose phosphate pathway. This is NAD(P)H-dependent D-xylose reductase XYR1 (XYR1) from Pyricularia oryzae (strain 70-15 / ATCC MYA-4617 / FGSC 8958) (Rice blast fungus).